The primary structure comprises 245 residues: Flavin mononucleotide hydrolase 1, chloroplatic (245 aa).

The transit peptide at 1-26 (MAAAAMHTSAEFINLKPNMWKKNPVR) directs the protein to the chloroplast.

It belongs to the HAD-like hydrolase superfamily. DOG/GPP family. Homodimer. Requires Mg(2+) as cofactor.

The protein resides in the plastid. It is found in the chloroplast stroma. It catalyses the reaction FMN + H2O = riboflavin + phosphate. The enzyme catalyses 5-amino-6-(5-phospho-D-ribitylamino)uracil + H2O = 5-amino-6-(D-ribitylamino)uracil + phosphate. FMN hydrolase that catalyzes the dephosphorylation of flavin mononucleotide (FMN) to riboflavin. Can also dephosphorylate 5-amino-6-(5-phospho-D-ribitylamino)uracil, also known as ARPP. Not required for riboflavin biosynthesis in planta, but may help maintaining flavin homeostasis within chloroplasts. In Arabidopsis thaliana (Mouse-ear cress), this protein is Flavin mononucleotide hydrolase 1, chloroplatic.